The sequence spans 273 residues: HMP-PP phosphatase (273 aa).

The active-site Nucleophile is aspartate 8. Mg(2+) contacts are provided by aspartate 8, aspartate 10, and aspartate 212.

The protein belongs to the HAD-like hydrolase superfamily. Cof family. Mg(2+) serves as cofactor.

It catalyses the reaction 4-amino-2-methyl-5-(diphosphooxymethyl)pyrimidine + H2O = 4-amino-2-methyl-5-(phosphooxymethyl)pyrimidine + phosphate + H(+). In terms of biological role, catalyzes the hydrolysis of 4-amino-2-methyl-5-hydroxymethylpyrimidine pyrophosphate (HMP-PP) to 4-amino-2-methyl-5-hydroxymethylpyrimidine phosphate (HMP-P). The sequence is that of HMP-PP phosphatase from Yersinia pseudotuberculosis serotype I (strain IP32953).